Reading from the N-terminus, the 517-residue chain is Protein disulfide isomerase-like 1-2 (517 aa).

An N-terminal signal peptide occupies residues 1–23; it reads MAVNLVLSFALAILISSSPTAVG. Residues 24–143 enclose the Thioredoxin 1 domain; that stretch reads VDATEELKEA…IVEYLKRQVG (120 aa). N-linked (GlcNAc...) asparagine glycosylation occurs at Asn41. Residues Cys61 and Cys64 each act as nucleophile in the active site. The cysteines at positions 61 and 64 are disulfide-linked. Asn301 carries an N-linked (GlcNAc...) asparagine glycan. Residues 357–484 form the Thioredoxin 2 domain; sequence VEYGNLTPYV…IISFINENRG (128 aa). Residues Cys407 and Cys410 each act as nucleophile in the active site. Cys407 and Cys410 are oxidised to a cystine. The Prevents secretion from ER signature appears at 514-517; that stretch reads KDEL.

It belongs to the protein disulfide isomerase family.

The protein localises to the endoplasmic reticulum lumen. The catalysed reaction is Catalyzes the rearrangement of -S-S- bonds in proteins.. In terms of biological role, acts as a protein-folding catalyst that interacts with nascent polypeptides to catalyze the formation, isomerization, and reduction or oxidation of disulfide bonds. May play a role in storage protein biogenesis. The chain is Protein disulfide isomerase-like 1-2 (PDIL1-2) from Oryza sativa subsp. japonica (Rice).